The following is a 381-amino-acid chain: MEMYFKRMKDEWTGLVEQADPLIRAKAAEIALAHAHYLSIEFYRIVRIDPHAEEFLSNEQVERQLKSAMERWIINVLSAQVDDVERLIQIQHTVAEVHARIGIPVEIVEMGFRVLKKILYPVIFSSDYSAAEKLQVYHFSINSIDIAMEVMTRAFTFSDSSASKEDENYRIFSLLENAEEEKERQIASILSWEIDIIYKVLLDSDLGSSLPLSQADFGLWFNHKGRHYFSGIAEVGHISRLIQDFDGIFNQTMRNTRILNNRSLRVKFLLQIRNTVSQIITLLRELFEEVSRHEVGMDVLTKLLNRRFLPTIFKREIAHANRTGTPLSVLIIDVDKFKEINDTWGHNTGDEILRKVSFLSQKRLVKSKILGAGSSRKLAVS.

A heme-binding site is contributed by histidine 98. In terms of domain architecture, GGDEF spans 325-381; it reads TPLSVLIIDVDKFKEINDTWGHNTGDEILRKVSFLSQKRLVKSKILGAGSSRKLAVS. Aspartate 333 provides a ligand contact to Mg(2+). Substrate-binding residues include asparagine 341 and aspartate 350.

The cofactor is heme. Mg(2+) is required as a cofactor.

The catalysed reaction is 2 GTP = 3',3'-c-di-GMP + 2 diphosphate. It participates in purine metabolism; 3',5'-cyclic di-GMP biosynthesis. Functionally, globin-coupled heme-based oxygen sensor protein displaying diguanylate cyclase (DGC) activity in response to oxygen availability. Thus, catalyzes the synthesis of cyclic diguanylate (c-di-GMP) via the condensation of 2 GTP molecules. Cyclic-di-GMP is a second messenger which controls cell surface-associated traits in bacteria. The protein is Diguanylate cyclase DosC (dosC) of Shigella flexneri.